Here is a 215-residue protein sequence, read N- to C-terminus: Vesicle-trafficking protein SEC22b (215 aa).

Topologically, residues 2–194 are cytoplasmic; sequence VLLTMIARVA…KYLNMRSTYA (193 aa). One can recognise a Longin domain in the interval 6–119; the sequence is MIARVADGLP…YSFIEFDTFI (114 aa). Position 38 is an N6-acetyllysine (K38). In terms of domain architecture, v-SNARE coiled-coil homology spans 134–194; it reads NLGSINTELQ…KYLNMRSTYA (61 aa). S137 is subject to Phosphoserine. Phosphothreonine is present on T140. 4 positions are modified to phosphoserine: S164, S168, S174, and S177. Residues 195–215 form a helical; Anchor for type IV membrane protein membrane-spanning segment; the sequence is KLAAVAVFFIMLIVYVRFWWL.

It belongs to the synaptobrevin family. As to quaternary structure, interacts with STX17. Component of two distinct SNARE complexes consisting of STX5, GOSR2/BOS1, BET1 and SEC22B or STX18, USE1L, BNIP1/SEC20L and SEC22B. YKT6 can probably replace SEC22B in either complex. Interacts with the COPII Sec23/24 complex composed of SEC23A and SEC24A; recruits SEC22B into COPII-coated vesicles to allow its transport from the endoplasmic reticulum to the Golgi. Interacts with BET1.

It is found in the endoplasmic reticulum membrane. It localises to the endoplasmic reticulum-Golgi intermediate compartment membrane. The protein localises to the golgi apparatus. The protein resides in the cis-Golgi network membrane. Its subcellular location is the trans-Golgi network membrane. It is found in the melanosome. Its function is as follows. SNARE involved in targeting and fusion of ER-derived transport vesicles with the Golgi complex as well as Golgi-derived retrograde transport vesicles with the ER. The chain is Vesicle-trafficking protein SEC22b (SEC22B) from Homo sapiens (Human).